Consider the following 263-residue polypeptide: MRIQVENLWVAFKNKVALREVYLDLFGDGAQVVALIGPSGAGKSTFLRLLKGMVKLSGGKVWVDSLPLHEGQRDALQQLRRRTAMVYQTFQLIGRLTVLENVLVGRLPHMSPIRGLFKHFSVQDLAKAEKLLEEVGLLEHAWQRADALSGGQQQRVGIARALIQEPALILADEPISALDPKNAKVIMELLLGAVRRQGIPLLVTLHHLEMVRHYADRVVAFKEGQVFFNGPLSDFTSEKEKELYFGEKETHEASEWFSSTLMV.

The 246-residue stretch at 3–248 (IQVENLWVAF…KEKELYFGEK (246 aa)) folds into the ABC transporter domain. ATP is bound at residue 37–44 (GPSGAGKS).

The protein belongs to the ABC transporter superfamily. Phosphonates importer (TC 3.A.1.9.1) family. As to quaternary structure, the complex is composed of two ATP-binding proteins (PhnC), two transmembrane proteins (PhnE) and a solute-binding protein (PhnD).

The protein resides in the cell inner membrane. The catalysed reaction is phosphonate(out) + ATP + H2O = phosphonate(in) + ADP + phosphate + H(+). Part of the ABC transporter complex PhnCDE involved in phosphonates import. Responsible for energy coupling to the transport system. The sequence is that of Phosphonates import ATP-binding protein PhnC 1 from Synechococcus sp. (strain JA-2-3B'a(2-13)) (Cyanobacteria bacterium Yellowstone B-Prime).